Reading from the N-terminus, the 2617-residue chain is Ubiquitin carboxyl-terminal hydrolase 24 (2617 aa).

Residues 3–44 (SEEEQHMTTLLCMGFSDPATIRKALRLAKNDINEAVALLTNE) enclose the UBA domain. The tract at residues 45-99 (RPGLDYGGYEPMDSGGPSPGPGGGPRGDSGSDGSGPSRGGSTGGGGGFDPPPAYH) is disordered. Residues Ser-62 and Ser-85 each carry the phosphoserine modification. Residues 65 to 92 (PGGGPRGDSGSDGSGPSRGGSTGGGGGF) show a composition bias toward gly residues. Tyr-939 is subject to Phosphotyrosine. 2 disordered regions span residues 1030–1056 (KTSGSGTPSGSSADSSTSSSSSSSGAF) and 1127–1148 (LLSETSSQSSKSPSLSSKQQHQ). Low complexity-rich tracts occupy residues 1031–1056 (TSGSGTPSGSSADSSTSSSSSSSGAF) and 1128–1148 (LSETSSQSSKSPSLSSKQQHQ). 2 positions are modified to phosphoserine: Ser-1138 and Ser-1282. The region spanning 1686–2039 (VGLRNGGATC…NAYMLFYQRV (354 aa)) is the USP domain. The active-site Nucleophile is Cys-1695. Positions 1920 to 1942 (QDSSSEVGENGRNMDQGGGGSPR) are disordered. A Phosphoserine modification is found at Ser-1940. His-1967 (proton acceptor) is an active-site residue. Phosphoserine is present on residues Ser-2044, Ser-2074, and Ser-2558. Positions 2060 to 2087 (AEDLSLSAPSSPEISPQSSPRPHRPNND) are disordered. A compositionally biased stretch (low complexity) spans 2066–2079 (SAPSSPEISPQSSP). Phosphothreonine is present on Thr-2562. A disordered region spans residues 2572–2617 (EKEQSGSSNGSESSPANENGERHLQQGSESPMMIGELRSDLDDVDP). Residues 2576–2589 (SGSSNGSESSPANE) are compositionally biased toward low complexity. Phosphoserine is present on Ser-2601. The segment covering 2608-2617 (LRSDLDDVDP) has biased composition (basic and acidic residues).

The protein belongs to the peptidase C19 family.

The enzyme catalyses Thiol-dependent hydrolysis of ester, thioester, amide, peptide and isopeptide bonds formed by the C-terminal Gly of ubiquitin (a 76-residue protein attached to proteins as an intracellular targeting signal).. Its function is as follows. Protease that can remove conjugated ubiquitin from target proteins and polyubiquitin chains. Deubiquitinates DDB2, preventing its proteasomal degradation. The protein is Ubiquitin carboxyl-terminal hydrolase 24 (Usp24) of Mus musculus (Mouse).